A 633-amino-acid polypeptide reads, in one-letter code: Keratin, type II cytoskeletal 2 epidermal (633 aa).

A head region spans residues 1 to 189 (MSCQISCKSR…DPEIQNVKSQ (189 aa)). Residue arginine 18 is modified to Asymmetric dimethylarginine. 3 positions are modified to phosphoserine: serine 21, serine 24, and serine 60. The tract at residues 190 to 225 (EREQIKTLNNKFASFIDKVRFLEQQNQVLQTKWELL) is coil 1A. Residues 190–503 (EREQIKTLNN…KLLEGEECRM (314 aa)) enclose the IF rod domain. The linker 1 stretch occupies residues 226-244 (QQLDVSTRTTNLEPIFQAY). Positions 245-336 (IAKLKKYVDT…FLFDXELSQM (92 aa)) are coil 1B. Residues 337–360 (QTQISETNVTLSMDNNRSLDLDSI) form a linker 12 region. Residues 361–499 (ISEVKAQYEE…ATYRKLLEGE (139 aa)) are coil 2. A tail region spans residues 500–633 (ECRMSGDLSS…SGSSVTFSFR (134 aa)). Positions 518 to 527 (SSMSSSMTSR) are enriched in low complexity. Residues 518–633 (SSMSSSMTSR…SGSSVTFSFR (116 aa)) are disordered. The segment covering 528–613 (GGFGGYGSGG…GYGSGGGSRG (86 aa)) has biased composition (gly residues). An omega-N-methylarginine mark is found at arginine 588 and arginine 612.

It belongs to the intermediate filament family. In terms of assembly, heterotetramer of two type I and two type II keratins. Associates with KRT10.

It is found in the cytoplasm. In terms of biological role, probably contributes to terminal cornification. Associated with keratinocyte activation, proliferation and keratinization. Required for maintenance of corneocytes and keratin filaments in suprabasal keratinocytes in the epidermis of the ear, potentially via moderation of expression and localization of keratins and their partner proteins. Plays a role in the establishment of the epidermal barrier on plantar skin. This chain is Keratin, type II cytoskeletal 2 epidermal (KRT2), found in Canis lupus familiaris (Dog).